A 467-amino-acid chain; its full sequence is tRNA-2-methylthio-N(6)-dimethylallyladenosine synthase (467 aa).

Residues 1–20 form a disordered region; sequence MSDDTTQIEPAMAQETSPRA. One can recognise an MTTase N-terminal domain in the interval 23 to 143; sequence RKVFVKTYGC…LPNALARVRG (121 aa). Cys-32, Cys-68, Cys-106, Cys-184, Cys-188, and Cys-191 together coordinate [4Fe-4S] cluster. A Radical SAM core domain is found at 170–402; the sequence is RKRGVSAFLT…QALLSAQQYA (233 aa). The region spanning 405–467 is the TRAM domain; the sequence is DSMIGRKMDV…TNSLIAQKLA (63 aa).

The protein belongs to the methylthiotransferase family. MiaB subfamily. Monomer. Requires [4Fe-4S] cluster as cofactor.

The protein localises to the cytoplasm. It catalyses the reaction N(6)-dimethylallyladenosine(37) in tRNA + (sulfur carrier)-SH + AH2 + 2 S-adenosyl-L-methionine = 2-methylsulfanyl-N(6)-dimethylallyladenosine(37) in tRNA + (sulfur carrier)-H + 5'-deoxyadenosine + L-methionine + A + S-adenosyl-L-homocysteine + 2 H(+). Catalyzes the methylthiolation of N6-(dimethylallyl)adenosine (i(6)A), leading to the formation of 2-methylthio-N6-(dimethylallyl)adenosine (ms(2)i(6)A) at position 37 in tRNAs that read codons beginning with uridine. This chain is tRNA-2-methylthio-N(6)-dimethylallyladenosine synthase, found in Brucella abortus (strain S19).